A 356-amino-acid chain; its full sequence is uncharacterized protein (356 aa).

The first 21 residues, 1–21 (MKLITAPCRALLALPFCYAFS), serve as a signal peptide directing secretion.

This is an uncharacterized protein from Escherichia coli (strain K12).